The following is a 141-amino-acid chain: HTH-type transcriptional repressor NsrR (141 aa).

Positions Gln-2 to Gln-129 constitute an HTH rrf2-type domain. Residues Ile-28–Arg-51 constitute a DNA-binding region (H-T-H motif). [2Fe-2S] cluster contacts are provided by Cys-91, Cys-96, and Cys-102.

It depends on [2Fe-2S] cluster as a cofactor.

In terms of biological role, nitric oxide-sensitive repressor of genes involved in protecting the cell against nitrosative stress. May require iron for activity. This is HTH-type transcriptional repressor NsrR from Yersinia enterocolitica serotype O:8 / biotype 1B (strain NCTC 13174 / 8081).